A 474-amino-acid chain; its full sequence is tRNA modification GTPase MnmE (474 aa).

(6S)-5-formyl-5,6,7,8-tetrahydrofolate contacts are provided by Arg28, Glu92, and Arg131. The 169-residue stretch at 227-395 (GIPVAIVGTT…LKGELTQIME (169 aa)) folds into the TrmE-type G domain. Asn237 provides a ligand contact to K(+). GTP contacts are provided by residues 237–242 (NVGKST), 256–262 (SDIHGTT), 281–284 (DTAG), and 376–378 (SAR). Ser241 serves as a coordination point for Mg(2+). 3 residues coordinate K(+): Ser256, Ile258, and Thr261. Residue Thr262 coordinates Mg(2+). Residue Lys474 coordinates (6S)-5-formyl-5,6,7,8-tetrahydrofolate.

Belongs to the TRAFAC class TrmE-Era-EngA-EngB-Septin-like GTPase superfamily. TrmE GTPase family. In terms of assembly, homodimer. Heterotetramer of two MnmE and two MnmG subunits. K(+) is required as a cofactor.

The protein resides in the cytoplasm. Functionally, exhibits a very high intrinsic GTPase hydrolysis rate. Involved in the addition of a carboxymethylaminomethyl (cmnm) group at the wobble position (U34) of certain tRNAs, forming tRNA-cmnm(5)s(2)U34. This is tRNA modification GTPase MnmE from Porphyromonas gingivalis (strain ATCC BAA-308 / W83).